Consider the following 107-residue polypeptide: Pyrimidine/purine nucleoside phosphorylase (107 aa).

The protein belongs to the nucleoside phosphorylase PpnP family.

It catalyses the reaction a purine D-ribonucleoside + phosphate = a purine nucleobase + alpha-D-ribose 1-phosphate. The enzyme catalyses adenosine + phosphate = alpha-D-ribose 1-phosphate + adenine. It carries out the reaction cytidine + phosphate = cytosine + alpha-D-ribose 1-phosphate. The catalysed reaction is guanosine + phosphate = alpha-D-ribose 1-phosphate + guanine. It catalyses the reaction inosine + phosphate = alpha-D-ribose 1-phosphate + hypoxanthine. The enzyme catalyses thymidine + phosphate = 2-deoxy-alpha-D-ribose 1-phosphate + thymine. It carries out the reaction uridine + phosphate = alpha-D-ribose 1-phosphate + uracil. The catalysed reaction is xanthosine + phosphate = alpha-D-ribose 1-phosphate + xanthine. Functionally, catalyzes the phosphorolysis of diverse nucleosides, yielding D-ribose 1-phosphate and the respective free bases. Can use uridine, adenosine, guanosine, cytidine, thymidine, inosine and xanthosine as substrates. Also catalyzes the reverse reactions. The protein is Pyrimidine/purine nucleoside phosphorylase of Aromatoleum aromaticum (strain DSM 19018 / LMG 30748 / EbN1) (Azoarcus sp. (strain EbN1)).